A 274-amino-acid chain; its full sequence is NH(3)-dependent NAD(+) synthetase (274 aa).

46-53 (GISGGQDS) provides a ligand contact to ATP. Asp-52 contacts Mg(2+). Arg-140 serves as a coordination point for deamido-NAD(+). Thr-160 is an ATP binding site. Glu-165 serves as a coordination point for Mg(2+). Deamido-NAD(+) contacts are provided by Lys-173 and Asp-180. ATP-binding residues include Lys-189 and Thr-211. 260 to 261 (HK) lines the deamido-NAD(+) pocket.

It belongs to the NAD synthetase family. In terms of assembly, homodimer.

It catalyses the reaction deamido-NAD(+) + NH4(+) + ATP = AMP + diphosphate + NAD(+) + H(+). The protein operates within cofactor biosynthesis; NAD(+) biosynthesis; NAD(+) from deamido-NAD(+) (ammonia route): step 1/1. Catalyzes the ATP-dependent amidation of deamido-NAD to form NAD. Uses ammonia as a nitrogen source. This Pectobacterium atrosepticum (strain SCRI 1043 / ATCC BAA-672) (Erwinia carotovora subsp. atroseptica) protein is NH(3)-dependent NAD(+) synthetase.